We begin with the raw amino-acid sequence, 1247 residues long: Nidogen-1 (1247 aa).

Residues 1–28 (MLASSSRIRAAWTRALLLPLLLAGPVGC) form the signal peptide. Positions 106–268 (PFLADLDTTD…GVWVFEIGSP (163 aa)) constitute an NIDO domain. A sulfotyrosine mark is found at Tyr289 and Tyr296. Positions 386–426 (SRQTCANNRHQCSVHAECRDYATGFCCSCVAGYTGNGRQCV) constitute an EGF-like 1 domain. 19 disulfides stabilise this stretch: Cys390/Cys403, Cys397/Cys412, Cys411/Cys618, Cys414/Cys425, Cys672/Cys685, Cys679/Cys695, Cys697/Cys708, Cys714/Cys727, Cys721/Cys736, Cys738/Cys750, Cys762/Cys777, Cys769/Cys787, Cys789/Cys800, Cys806/Cys817, Cys811/Cys826, Cys828/Cys839, Cys849/Cys878, Cys889/Cys896, and Cys898/Cys919. The 238-residue stretch at 430–667 (SPQRVNGKVK…GPVREGSPDA (238 aa)) folds into the Nidogen G2 beta-barrel domain. The region spanning 668–709 (LQNPCYIGTHGCDTNAACRPGPRTQFTCECSIGFRGDGRTCY) is the EGF-like 2 domain. The short motif at 702–704 (RGD) is the Cell attachment site element. Positions 710–751 (DIDECSEQPSVCGSHTICNNHPGTFRCECVEGYQFSDEGTCV) constitute an EGF-like 3; calcium-binding domain. An EGF-like 4 domain is found at 758–801 (PINYCETGLHNCDIPQRAQCIYTGGSSYTCSCLPGFSGDGQACQ). In terms of domain architecture, EGF-like 5; calcium-binding spans 802–840 (DVDECQPSRCHPDAFCYNTPGSFTCQCKPGYQGDGFRCV). The Thyroglobulin type-1 domain maps to 846–919 (KTRCQHEREH…RTRPGMTPPC (74 aa)). O-linked (GalNAc...) threonine glycosylation is found at Thr922 and Thr935. LDL-receptor class B repeat units follow at residues 990–1032 (KMVY…DHLG), 1033–1075 (RNIF…DSVR), 1076–1120 (GNLY…DAFS), and 1121–1162 (SQLC…YGKN). An EGF-like 6 domain is found at 1208-1244 (GHNYCSVNNGGCTHLCLATPGSRTCRCPDNTLGVDCI). 3 disulfides stabilise this stretch: Cys1212/Cys1223, Cys1219/Cys1232, and Cys1234/Cys1243.

As to quaternary structure, interacts with FBLN1. Interacts with LGALS3BP. Interacts with PLXDC1. Interacts with SVEP1. Post-translationally, N- and O-glycosylated.

The protein localises to the secreted. It is found in the extracellular space. Its subcellular location is the extracellular matrix. It localises to the basement membrane. Sulfated glycoprotein widely distributed in basement membranes and tightly associated with laminin. Also binds to collagen IV and perlecan. It probably has a role in cell-extracellular matrix interactions. The chain is Nidogen-1 (NID1) from Homo sapiens (Human).